The following is a 181-amino-acid chain: Large ribosomal subunit protein uL5 (181 aa).

This sequence belongs to the universal ribosomal protein uL5 family. As to quaternary structure, part of the 50S ribosomal subunit; contacts the 5S rRNA and probably tRNA. Forms a bridge to the 30S subunit in the 70S ribosome.

This is one of the proteins that bind and probably mediate the attachment of the 5S RNA into the large ribosomal subunit, where it forms part of the central protuberance. In the 70S ribosome it contacts protein S13 of the 30S subunit (bridge B1b), connecting the 2 subunits; this bridge is implicated in subunit movement. May contact the P site tRNA; the 5S rRNA and some of its associated proteins might help stabilize positioning of ribosome-bound tRNAs. The polypeptide is Large ribosomal subunit protein uL5 (Methanococcus maripaludis (strain DSM 14266 / JCM 13030 / NBRC 101832 / S2 / LL)).